Here is a 136-residue protein sequence, read N- to C-terminus: Histone H3 (136 aa).

The interval 1–43 (MARTKQTARKSTGAKAPRKQLASKAARKSAPATGGIKKPHRFR) is disordered. Residues lysine 5 and lysine 10 each carry the N6,N6,N6-trimethyllysine; alternate modification. Lysine 5 carries the post-translational modification N6,N6-dimethyllysine; alternate. 2 positions are modified to N6-acetyllysine; alternate: lysine 5 and lysine 10. Lysine 5 is subject to N6-methyllysine; alternate. Serine 11 carries the phosphoserine modification. 3 positions are modified to N6-acetyllysine: lysine 15, lysine 19, and lysine 24. 2 positions are modified to N6,N6,N6-trimethyllysine; alternate: lysine 28 and lysine 37. N6,N6-dimethyllysine; alternate occurs at positions 28 and 37. N6-acetyllysine; alternate occurs at positions 28, 37, and 57. An N6-methyllysine; alternate mark is found at lysine 28, lysine 37, and lysine 57. Residue lysine 80 is modified to N6-methyllysine.

Belongs to the histone H3 family. In terms of assembly, the nucleosome is a histone octamer containing two molecules each of H2A, H2B, H3 and H4 assembled in one H3-H4 heterotetramer and two H2A-H2B heterodimers. The octamer wraps approximately 147 bp of DNA. Post-translationally, phosphorylated to form H3S10ph. H3S10ph promotes subsequent H3K14ac formation by GCN5. H3S10ph is only found in the mitotically dividing MIC, but not in the amitotically dividing MAC. H3S10ph is correlated with chromosome condensation during mitotic or meiotic micronuclear divisions. In terms of processing, acetylation of histone H3 leads to transcriptional activation. H3K14ac formation by GCN5 is promoted by H3S10ph. H3K9acK14ac is the preferred acetylated form of newly synthesized H3. Acetylation occurs almost exclusively in the MAC. Methylated to form H3K4me. H3K4me is only found in the transcriptionally active MAC. Methylated to form H3K9me in developing MACs during conjugation, when genome-wide DNA elimination occurs. At this stage, H3K9me specifically occurs on DNA sequences being eliminated (IES), probably targeted by small scan RNAs (scnRNAs) bound to IES, and is required for efficient IES elimination. H3K9me is required for the interaction with the chromodomains of PDD1 and PDD3. Post-translationally, the full-length protein H3S (slow migrating) is converted to H3F (fast migrating) by proteolytic removal of the first 6 residues. H3F is unique to MIC, and processing seems to occur regularly each generation at a specific point in the cell cycle.

The protein localises to the nucleus. It is found in the chromosome. Functionally, core component of nucleosome. Nucleosomes wrap and compact DNA into chromatin, limiting DNA accessibility to the cellular machineries which require DNA as a template. Histones thereby play a central role in transcription regulation, DNA repair, DNA replication and chromosomal stability. DNA accessibility is regulated via a complex set of post-translational modifications of histones, also called histone code, and nucleosome remodeling. This chain is Histone H3, found in Tetrahymena pyriformis.